Reading from the N-terminus, the 100-residue chain is Urease subunit gamma 2 (100 aa).

Belongs to the urease gamma subunit family. Heterotrimer of UreA (gamma), UreB (beta) and UreC (alpha) subunits. Three heterotrimers associate to form the active enzyme.

It is found in the cytoplasm. It carries out the reaction urea + 2 H2O + H(+) = hydrogencarbonate + 2 NH4(+). It functions in the pathway nitrogen metabolism; urea degradation; CO(2) and NH(3) from urea (urease route): step 1/1. In terms of biological role, disrupting the ure2 operon has no effect on urease activity or pathogen survival in BALB/c mice when administered orally. This chain is Urease subunit gamma 2, found in Brucella abortus (strain 2308).